The sequence spans 216 residues: MEDPLIKILKQFSIEDAKYVEYNLDRQFLALKENPKPVGLVIANALISYQLTMPGERYWELFAKKVNSFNDLYDFVKKYNPRFLSNKLKRLERFKPYIDIIEQNREHYYENMVALNKFLAKIMNQNIYDKTIVFSIKMFAYAMRALGYKFKPFPFEIAIPLDYRLKKINPDLNYWFYVSKQTNIPPLHIDSLIWPIFRIKNLPKKFALLKEYLSNL.

The 8-oxoguanine site is built by Gln27, Ser48, and Trp59. Residues 106 to 170 form a helix-hairpin-helix region; that stretch reads EHYYENMVAL…LDYRLKKINP (65 aa). Lys130 serves as the catalytic Schiff-base intermediate with DNA. Residues Phe134 and Pro160 each coordinate 8-oxoguanine. Residue Asp162 is part of the active site. Residues Asp190 and Trp194 each contribute to the 8-oxoguanine site.

It belongs to the archaeal N-glycosylase/DNA lyase (AGOG) family.

The enzyme catalyses 2'-deoxyribonucleotide-(2'-deoxyribose 5'-phosphate)-2'-deoxyribonucleotide-DNA = a 3'-end 2'-deoxyribonucleotide-(2,3-dehydro-2,3-deoxyribose 5'-phosphate)-DNA + a 5'-end 5'-phospho-2'-deoxyribonucleoside-DNA + H(+). Its function is as follows. DNA repair enzyme that is part of the base excision repair (BER) pathway; protects from oxidative damage by removing the major product of DNA oxidation, 8-oxoguanine (GO), from single- and double-stranded DNA substrates. The polypeptide is N-glycosylase/DNA lyase (Nanoarchaeum equitans (strain Kin4-M)).